Reading from the N-terminus, the 457-residue chain is Argininosuccinate lyase (457 aa).

The protein belongs to the lyase 1 family. Argininosuccinate lyase subfamily.

Its subcellular location is the cytoplasm. The catalysed reaction is 2-(N(omega)-L-arginino)succinate = fumarate + L-arginine. Its pathway is amino-acid biosynthesis; L-arginine biosynthesis; L-arginine from L-ornithine and carbamoyl phosphate: step 3/3. In Haemophilus influenzae (strain ATCC 51907 / DSM 11121 / KW20 / Rd), this protein is Argininosuccinate lyase.